A 440-amino-acid chain; its full sequence is Thymidine phosphorylase (440 aa).

It belongs to the thymidine/pyrimidine-nucleoside phosphorylase family. In terms of assembly, homodimer.

The enzyme catalyses thymidine + phosphate = 2-deoxy-alpha-D-ribose 1-phosphate + thymine. It functions in the pathway pyrimidine metabolism; dTMP biosynthesis via salvage pathway; dTMP from thymine: step 1/2. Functionally, the enzymes which catalyze the reversible phosphorolysis of pyrimidine nucleosides are involved in the degradation of these compounds and in their utilization as carbon and energy sources, or in the rescue of pyrimidine bases for nucleotide synthesis. This Shigella flexneri serotype 5b (strain 8401) protein is Thymidine phosphorylase.